Consider the following 376-residue polypeptide: Protein STRICTOSIDINE SYNTHASE-LIKE 8 (376 aa).

Positions Met-1 to Gly-31 are cleaved as a signal peptide. Residues Asn-98, Asn-172, and Asn-224 are each glycosylated (N-linked (GlcNAc...) asparagine).

The protein belongs to the strictosidine synthase family.

The protein resides in the vacuole. This is Protein STRICTOSIDINE SYNTHASE-LIKE 8 from Arabidopsis thaliana (Mouse-ear cress).